The chain runs to 876 residues: MAP7 domain-containing protein 3 (876 aa).

Position 1 is an N-acetylmethionine (Met-1). The stretch at 65 to 144 (NDIKQRLARE…DEAQKEKFTA (80 aa)) forms a coiled coil. Disordered stretches follow at residues 72-137 (ARER…KDEA) and 170-246 (AMAN…KPRV). Residues 171 to 183 (MANSESKTANKRS) show a composition bias toward polar residues. Ser-185 is modified (phosphoserine). Residues 191 to 211 (QGTSALIRQMPLSSAGLQNSV) show a composition bias toward polar residues. A compositionally biased stretch (basic and acidic residues) spans 214–244 (RKTDKERSSSLNRRDSNLHSSTDKEQAERKP). Ser-322 is modified (phosphoserine). The segment at 407 to 475 (EAAPEGSLEA…ARDAPKKSEM (69 aa)) is disordered. The span at 425–438 (APKESVKGSPKESM) shows a compositional bias: basic and acidic residues. Phosphoserine is present on residues Ser-441, Ser-457, and Ser-461. Over residues 465–475 (KARDAPKKSEM) the composition is skewed to basic and acidic residues. Phosphoserine is present on Ser-490. Disordered regions lie at residues 509-533 (SPIS…SKQS), 613-697 (QREK…KKEH), and 723-754 (RKTD…SDKD). Polar residues predominate over residues 510 to 521 (PISTNRQIQKNC). A Phosphoserine modification is found at Ser-524. Coiled coils occupy residues 558-640 (VKKK…MAKE) and 689-724 (EADK…RTRK). Composition is skewed to basic and acidic residues over residues 613-639 (QREK…DMAK) and 680-697 (GDAK…KKEH). Over residues 742–752 (EEAEADNEESD) the composition is skewed to acidic residues. Ser-770 and Ser-817 each carry phosphoserine. A disordered region spans residues 802–876 (PKTYFNGDLK…LPKSSDTFRQ (75 aa)). A compositionally biased stretch (polar residues) spans 820 to 830 (DTSIQEVVSRP). Basic residues predominate over residues 831-842 (SSKRMTSHTTKT). Ser-832 is subject to Phosphoserine. Residues 848-860 (TNTTSRSSAQTKS) are compositionally biased toward polar residues. Residues 861-876 (EGFHDILPKSSDTFRQ) are compositionally biased toward basic and acidic residues.

It belongs to the MAP7 family. In terms of assembly, interacts (via N-terminus coiled coil domains) with tubulin and microtubules.

The protein resides in the cytoplasm. The protein localises to the cytoskeleton. It localises to the spindle. Functionally, promotes the assembly and stability of microtubules. This chain is MAP7 domain-containing protein 3 (MAP7D3), found in Homo sapiens (Human).